The primary structure comprises 620 residues: Glutathione-regulated potassium-efflux system protein KefC (620 aa).

12 helical membrane passes run 4-24 (HTLVQALIYLGSAALIVPIAV), 26-46 (LGLGSVLGYLIAGCIIGLWGL), 54-74 (SILHFAEIGVVLMLFIIGLEL), 90-110 (GALQMVICGGLLGLFCMLLGL), 114-134 (VAELIGMTLALSSTAIAMQAM), 149-169 (FAVLLFQDIAAILLVAMIPLL), 178-198 (MGAFALSALKVAGALVLVVLL), 218-238 (VFSAVALFLVFGFGLLLEEVG), 270-290 (GLLLGLFFIGVGMSIDFGTLI), 294-314 (LRIVILLLGFLIIKIAMLWLI), 327-347 (WFAVLLGQGSEFAFVVFGAAQ), and 359-379 (SLTLAVALSMAATPILLVILN). An RCK N-terminal domain is found at 399 to 518 (QPRVIIAGFG…AGVEKPERET (120 aa)). The segment at 597–620 (GWQGTEEGKHTGNMADEPETKPSS) is disordered.

This sequence belongs to the monovalent cation:proton antiporter 2 (CPA2) transporter (TC 2.A.37) family. KefC subfamily. Homodimer. Interacts with the regulatory subunit KefF.

The protein localises to the cell inner membrane. Functionally, pore-forming subunit of a potassium efflux system that confers protection against electrophiles. Catalyzes K(+)/H(+) antiport. The polypeptide is Glutathione-regulated potassium-efflux system protein KefC (Shigella flexneri serotype 5b (strain 8401)).